The following is a 92-amino-acid chain: MNKNYSYPLDLSWSTEELASVLSFFNNVEAAYEQKVQAEKLLKSYEAFKQVVPSKGQEKRIGREFENVSGYSLYHAVQEAKSKGKGSISLGK.

The protein belongs to the UPF0223 family.

The polypeptide is UPF0223 protein SSA_0938 (Streptococcus sanguinis (strain SK36)).